The chain runs to 256 residues: Imidazole glycerol phosphate synthase subunit HisF (256 aa).

Catalysis depends on residues aspartate 12 and aspartate 131.

This sequence belongs to the HisA/HisF family. In terms of assembly, heterodimer of HisH and HisF.

The protein localises to the cytoplasm. The catalysed reaction is 5-[(5-phospho-1-deoxy-D-ribulos-1-ylimino)methylamino]-1-(5-phospho-beta-D-ribosyl)imidazole-4-carboxamide + L-glutamine = D-erythro-1-(imidazol-4-yl)glycerol 3-phosphate + 5-amino-1-(5-phospho-beta-D-ribosyl)imidazole-4-carboxamide + L-glutamate + H(+). Its pathway is amino-acid biosynthesis; L-histidine biosynthesis; L-histidine from 5-phospho-alpha-D-ribose 1-diphosphate: step 5/9. IGPS catalyzes the conversion of PRFAR and glutamine to IGP, AICAR and glutamate. The HisF subunit catalyzes the cyclization activity that produces IGP and AICAR from PRFAR using the ammonia provided by the HisH subunit. In Pseudomonas fluorescens (strain ATCC BAA-477 / NRRL B-23932 / Pf-5), this protein is Imidazole glycerol phosphate synthase subunit HisF.